A 113-amino-acid chain; its full sequence is MSILGLFQKRSSGAVARDRLQLILAHERAESGRPDLVIQLREEILAVIANHVAVEPDKVKVTLERGEGVSTLGLDIELPLGASGKLDAKLAAKLAEVAANKGGAKPASSKKAA.

It belongs to the MinE family.

In terms of biological role, prevents the cell division inhibition by proteins MinC and MinD at internal division sites while permitting inhibition at polar sites. This ensures cell division at the proper site by restricting the formation of a division septum at the midpoint of the long axis of the cell. This is Cell division topological specificity factor from Methylobacterium radiotolerans (strain ATCC 27329 / DSM 1819 / JCM 2831 / NBRC 15690 / NCIMB 10815 / 0-1).